Here is a 350-residue protein sequence, read N- to C-terminus: Biotin synthase (350 aa).

The Radical SAM core domain maps to 38 to 256; the sequence is NYVQVSTLLS…IAVARIMMPE (219 aa). Residues Cys-53, Cys-57, and Cys-60 each contribute to the [4Fe-4S] cluster site. Residues Cys-97, Cys-128, Cys-188, and Arg-260 each coordinate [2Fe-2S] cluster.

It belongs to the radical SAM superfamily. Biotin synthase family. Homodimer. Requires [4Fe-4S] cluster as cofactor. The cofactor is [2Fe-2S] cluster.

The enzyme catalyses (4R,5S)-dethiobiotin + (sulfur carrier)-SH + 2 reduced [2Fe-2S]-[ferredoxin] + 2 S-adenosyl-L-methionine = (sulfur carrier)-H + biotin + 2 5'-deoxyadenosine + 2 L-methionine + 2 oxidized [2Fe-2S]-[ferredoxin]. The protein operates within cofactor biosynthesis; biotin biosynthesis; biotin from 7,8-diaminononanoate: step 2/2. Its function is as follows. Catalyzes the conversion of dethiobiotin (DTB) to biotin by the insertion of a sulfur atom into dethiobiotin via a radical-based mechanism. This chain is Biotin synthase, found in Aliivibrio salmonicida (strain LFI1238) (Vibrio salmonicida (strain LFI1238)).